The sequence spans 311 residues: Protoheme IX farnesyltransferase (311 aa).

The next 8 helical transmembrane spans lie at Val30–Pro50, Trp55–Phe75, Phe108–Thr128, Met129–Pro149, Gln153–Met173, Trp182–Tyr202, Phe233–Leu253, and Ile287–Leu307.

Belongs to the UbiA prenyltransferase family. Protoheme IX farnesyltransferase subfamily.

It is found in the cell inner membrane. The catalysed reaction is heme b + (2E,6E)-farnesyl diphosphate + H2O = Fe(II)-heme o + diphosphate. Its pathway is porphyrin-containing compound metabolism; heme O biosynthesis; heme O from protoheme: step 1/1. Its function is as follows. Converts heme B (protoheme IX) to heme O by substitution of the vinyl group on carbon 2 of heme B porphyrin ring with a hydroxyethyl farnesyl side group. The chain is Protoheme IX farnesyltransferase from Methylibium petroleiphilum (strain ATCC BAA-1232 / LMG 22953 / PM1).